The primary structure comprises 307 residues: Thymidylate synthase (307 aa).

DUMP contacts are provided by residues Arg-26 and 160-161; that span reads RR. Cys-180 acts as the Nucleophile in catalysis. Residues 209–212, Asn-220, and 250–252 each bind dUMP; these read RSCD and HIY. Asp-212 is a binding site for (6R)-5,10-methylene-5,6,7,8-tetrahydrofolate. Residue Ala-306 coordinates (6R)-5,10-methylene-5,6,7,8-tetrahydrofolate.

Belongs to the thymidylate synthase family. Bacterial-type ThyA subfamily. As to quaternary structure, homodimer.

It localises to the cytoplasm. It carries out the reaction dUMP + (6R)-5,10-methylene-5,6,7,8-tetrahydrofolate = 7,8-dihydrofolate + dTMP. It functions in the pathway pyrimidine metabolism; dTTP biosynthesis. Its function is as follows. Catalyzes the reductive methylation of 2'-deoxyuridine-5'-monophosphate (dUMP) to 2'-deoxythymidine-5'-monophosphate (dTMP) while utilizing 5,10-methylenetetrahydrofolate (mTHF) as the methyl donor and reductant in the reaction, yielding dihydrofolate (DHF) as a by-product. This enzymatic reaction provides an intracellular de novo source of dTMP, an essential precursor for DNA biosynthesis. In Rhizobium rhizogenes (strain K84 / ATCC BAA-868) (Agrobacterium radiobacter), this protein is Thymidylate synthase.